A 429-amino-acid polypeptide reads, in one-letter code: Cyclin-B2-2 (429 aa).

Residues 66-98 (SQRKQESCDKKKLDSLHPSISRSQEETKKLKPS) are disordered. Over residues 68-80 (RKQESCDKKKLDS) the composition is skewed to basic and acidic residues.

This sequence belongs to the cyclin family. Cyclin AB subfamily. As to quaternary structure, interacts with CDC20-1 and CDC20-2. Expressed in roots.

This chain is Cyclin-B2-2 (CYCB2-2), found in Arabidopsis thaliana (Mouse-ear cress).